The sequence spans 597 residues: Elongation factor 4 (597 aa).

Positions 2 to 184 (KHIRNFSIIA…NIVSAIPAPE (183 aa)) constitute a tr-type G domain. GTP contacts are provided by residues 14 to 19 (DHGKST) and 131 to 134 (NKID).

This sequence belongs to the TRAFAC class translation factor GTPase superfamily. Classic translation factor GTPase family. LepA subfamily.

Its subcellular location is the cell inner membrane. It catalyses the reaction GTP + H2O = GDP + phosphate + H(+). In terms of biological role, required for accurate and efficient protein synthesis under certain stress conditions. May act as a fidelity factor of the translation reaction, by catalyzing a one-codon backward translocation of tRNAs on improperly translocated ribosomes. Back-translocation proceeds from a post-translocation (POST) complex to a pre-translocation (PRE) complex, thus giving elongation factor G a second chance to translocate the tRNAs correctly. Binds to ribosomes in a GTP-dependent manner. This Vibrio parahaemolyticus serotype O3:K6 (strain RIMD 2210633) protein is Elongation factor 4.